The chain runs to 307 residues: Porphobilinogen deaminase (307 aa).

S-(dipyrrolylmethanemethyl)cysteine is present on cysteine 239.

This sequence belongs to the HMBS family. As to quaternary structure, monomer. It depends on dipyrromethane as a cofactor.

The enzyme catalyses 4 porphobilinogen + H2O = hydroxymethylbilane + 4 NH4(+). The protein operates within porphyrin-containing compound metabolism; protoporphyrin-IX biosynthesis; coproporphyrinogen-III from 5-aminolevulinate: step 2/4. In terms of biological role, tetrapolymerization of the monopyrrole PBG into the hydroxymethylbilane pre-uroporphyrinogen in several discrete steps. The chain is Porphobilinogen deaminase from Campylobacter jejuni subsp. doylei (strain ATCC BAA-1458 / RM4099 / 269.97).